A 348-amino-acid polypeptide reads, in one-letter code: Protein RecA (348 aa).

Residue 66-73 (GPESSGKT) coordinates ATP.

The protein belongs to the RecA family.

Its subcellular location is the cytoplasm. In terms of biological role, can catalyze the hydrolysis of ATP in the presence of single-stranded DNA, the ATP-dependent uptake of single-stranded DNA by duplex DNA, and the ATP-dependent hybridization of homologous single-stranded DNAs. It interacts with LexA causing its activation and leading to its autocatalytic cleavage. This Neisseria meningitidis serogroup B (strain ATCC BAA-335 / MC58) protein is Protein RecA.